The sequence spans 334 residues: Retinol dehydrogenase 14 (334 aa).

Position 51 to 57 (51 to 57 (GANSGLG)) interacts with NADP(+). A substrate-binding site is contributed by serine 190. Tyrosine 215 acts as the Proton acceptor in catalysis.

Belongs to the short-chain dehydrogenases/reductases (SDR) family.

It catalyses the reaction all-trans-retinol + NADP(+) = all-trans-retinal + NADPH + H(+). The enzyme catalyses 11-cis-retinol + NADP(+) = 11-cis-retinal + NADPH + H(+). It carries out the reaction 9-cis-retinol + NADP(+) = 9-cis-retinal + NADPH + H(+). In terms of biological role, retinol dehydrogenase with a clear preference for NADP. Displays high activity towards 9-cis, 11-cis and all-trans-retinol. Shows a very weak activity towards 13-cis-retinol. Has no activity towards steroids. This chain is Retinol dehydrogenase 14 (Rdh14), found in Mus musculus (Mouse).